A 406-amino-acid chain; its full sequence is S-adenosylmethionine synthase (406 aa).

Position 16 (His16) interacts with ATP. Asp18 provides a ligand contact to Mg(2+). Glu44 lines the K(+) pocket. Positions 57 and 100 each coordinate L-methionine. The tract at residues 100 to 110 (QSVDIAQGVDR) is flexible loop. ATP contacts are provided by residues 165–167 (DAK), Asp241, 247–248 (RK), Ala264, and Lys268. Asp241 lines the L-methionine pocket. L-methionine is bound at residue Lys272.

This sequence belongs to the AdoMet synthase family. As to quaternary structure, homotetramer; dimer of dimers. Mg(2+) serves as cofactor. It depends on K(+) as a cofactor.

It is found in the cytoplasm. It carries out the reaction L-methionine + ATP + H2O = S-adenosyl-L-methionine + phosphate + diphosphate. It functions in the pathway amino-acid biosynthesis; S-adenosyl-L-methionine biosynthesis; S-adenosyl-L-methionine from L-methionine: step 1/1. Functionally, catalyzes the formation of S-adenosylmethionine (AdoMet) from methionine and ATP. The overall synthetic reaction is composed of two sequential steps, AdoMet formation and the subsequent tripolyphosphate hydrolysis which occurs prior to release of AdoMet from the enzyme. In Chromohalobacter salexigens (strain ATCC BAA-138 / DSM 3043 / CIP 106854 / NCIMB 13768 / 1H11), this protein is S-adenosylmethionine synthase.